A 39-amino-acid chain; its full sequence is Photosystem II reaction center protein X (39 aa).

A helical membrane pass occupies residues 10–30 (WSLVLGAAIVLIPATIGLIFI).

Belongs to the PsbX family. Type 1 subfamily. As to quaternary structure, PSII is composed of 1 copy each of membrane proteins PsbA, PsbB, PsbC, PsbD, PsbE, PsbF, PsbH, PsbI, PsbJ, PsbK, PsbL, PsbM, PsbT, PsbX, PsbY, PsbZ, Psb30/Ycf12, peripheral proteins PsbO, CyanoQ (PsbQ), PsbU, PsbV and a large number of cofactors. It forms dimeric complexes.

The protein localises to the cellular thylakoid membrane. Its function is as follows. Involved in the binding and/or turnover of quinones at the Q(B) site of photosystem II (PSII). PSII is a light-driven water plastoquinone oxidoreductase, using light energy to abstract electrons from H(2)O, generating a proton gradient subsequently used for ATP formation. In Microcystis aeruginosa (strain NIES-843 / IAM M-2473), this protein is Photosystem II reaction center protein X.